An 859-amino-acid polypeptide reads, in one-letter code: Sulfate permease 1 (859 aa).

N-linked (GlcNAc...) asparagine glycosylation is found at N51 and N93. 8 helical membrane-spanning segments follow: residues 94 to 114, 116 to 136, 148 to 168, 173 to 193, 206 to 226, 234 to 254, 292 to 312, and 332 to 352; these read LTAK…KWFP, YNFT…CVLV, LSPE…SLFA, VCIG…AEVL, PIIA…LGIL, LISL…IIWG, FGLI…TFGI, and FYFY…TAIS. N-linked (GlcNAc...) asparagine glycans are attached at residues N358 and N391. A run of 4 helical transmembrane segments spans residues 395-415, 428-448, 468-488, and 525-545; these read EIPA…KSFG, LIAI…PATG, VFTG…FFFI, and FIVT…YFAM. 3 N-linked (GlcNAc...) asparagine glycosylation sites follow: N630, N653, and N718. Residues 630-808 form the STAS domain; sequence NTTVRPPPPG…SIIAGHSSFH (179 aa).

Belongs to the SLC26A/SulP transporter (TC 2.A.53) family.

Its subcellular location is the membrane. In terms of biological role, high affinity uptake of sulfate into the cell. The chain is Sulfate permease 1 (SUL1) from Saccharomyces cerevisiae (strain ATCC 204508 / S288c) (Baker's yeast).